The chain runs to 161 residues: 6,7-dimethyl-8-ribityllumazine synthase (161 aa).

5-amino-6-(D-ribitylamino)uracil contacts are provided by residues tryptophan 26, 58–60, and 81–83; these read SFE and VVI. Position 86-87 (86-87) interacts with (2S)-2-hydroxy-3-oxobutyl phosphate; it reads GT. Residue histidine 89 is the Proton donor of the active site. Phenylalanine 114 lines the 5-amino-6-(D-ribitylamino)uracil pocket. Arginine 128 contributes to the (2S)-2-hydroxy-3-oxobutyl phosphate binding site.

Belongs to the DMRL synthase family.

The enzyme catalyses (2S)-2-hydroxy-3-oxobutyl phosphate + 5-amino-6-(D-ribitylamino)uracil = 6,7-dimethyl-8-(1-D-ribityl)lumazine + phosphate + 2 H2O + H(+). The protein operates within cofactor biosynthesis; riboflavin biosynthesis; riboflavin from 2-hydroxy-3-oxobutyl phosphate and 5-amino-6-(D-ribitylamino)uracil: step 1/2. Functionally, catalyzes the formation of 6,7-dimethyl-8-ribityllumazine by condensation of 5-amino-6-(D-ribitylamino)uracil with 3,4-dihydroxy-2-butanone 4-phosphate. This is the penultimate step in the biosynthesis of riboflavin. The protein is 6,7-dimethyl-8-ribityllumazine synthase of Streptomyces avermitilis (strain ATCC 31267 / DSM 46492 / JCM 5070 / NBRC 14893 / NCIMB 12804 / NRRL 8165 / MA-4680).